We begin with the raw amino-acid sequence, 311 residues long: Probable branched-chain-amino-acid aminotransferase (311 aa).

Lys160 carries the post-translational modification N6-(pyridoxal phosphate)lysine.

The protein belongs to the class-IV pyridoxal-phosphate-dependent aminotransferase family. Pyridoxal 5'-phosphate serves as cofactor.

It catalyses the reaction L-leucine + 2-oxoglutarate = 4-methyl-2-oxopentanoate + L-glutamate. It carries out the reaction L-isoleucine + 2-oxoglutarate = (S)-3-methyl-2-oxopentanoate + L-glutamate. The enzyme catalyses L-valine + 2-oxoglutarate = 3-methyl-2-oxobutanoate + L-glutamate. It functions in the pathway amino-acid biosynthesis; L-isoleucine biosynthesis; L-isoleucine from 2-oxobutanoate: step 4/4. The protein operates within amino-acid biosynthesis; L-leucine biosynthesis; L-leucine from 3-methyl-2-oxobutanoate: step 4/4. It participates in amino-acid biosynthesis; L-valine biosynthesis; L-valine from pyruvate: step 4/4. Acts on leucine, isoleucine and valine. The chain is Probable branched-chain-amino-acid aminotransferase (ilvE) from Aquifex aeolicus (strain VF5).